The following is a 393-amino-acid chain: Putative N(4)-(beta-N-acetylglucosaminyl)-L-asparaginase GH22932 (393 aa).

The interval A15–S41 is disordered. The segment covering I19–S41 has biased composition (polar residues). Cystine bridges form between C100/C105 and C199/C215. T246 serves as the catalytic Nucleophile. Residues R274–D277 and T297–G300 contribute to the substrate site. The cysteines at positions 357 and 381 are disulfide-linked.

It belongs to the Ntn-hydrolase family. As to quaternary structure, heterotetramer of two alpha and two beta chains arranged as a dimer of alpha/beta heterodimers. Post-translationally, cleaved into an alpha and beta chain by autocatalysis; this activates the enzyme. The N-terminal residue of the beta subunit is responsible for the nucleophile hydrolase activity.

The catalysed reaction is N(4)-(beta-N-acetyl-D-glucosaminyl)-L-asparagine + H2O = N-acetyl-beta-D-glucosaminylamine + L-aspartate + H(+). Cleaves the GlcNAc-Asn bond which joins oligosaccharides to the peptide of asparagine-linked glycoproteins. The sequence is that of Putative N(4)-(beta-N-acetylglucosaminyl)-L-asparaginase GH22932 from Drosophila grimshawi (Hawaiian fruit fly).